We begin with the raw amino-acid sequence, 333 residues long: Phenylalanine--tRNA ligase alpha subunit (333 aa).

Glutamate 248 is a Mg(2+) binding site.

This sequence belongs to the class-II aminoacyl-tRNA synthetase family. Phe-tRNA synthetase alpha subunit type 1 subfamily. In terms of assembly, tetramer of two alpha and two beta subunits. It depends on Mg(2+) as a cofactor.

The protein localises to the cytoplasm. It carries out the reaction tRNA(Phe) + L-phenylalanine + ATP = L-phenylalanyl-tRNA(Phe) + AMP + diphosphate + H(+). The polypeptide is Phenylalanine--tRNA ligase alpha subunit (Ureaplasma parvum serovar 3 (strain ATCC 27815 / 27 / NCTC 11736)).